Reading from the N-terminus, the 396-residue chain is Elongation factor Tu (396 aa).

A tr-type G domain is found at K10 to V205. The interval G19–T26 is G1. Residue G19–T26 coordinates GTP. Position 26 (T26) interacts with Mg(2+). Residues G62–N66 form a G2 region. The G3 stretch occupies residues D83 to G86. Residues D83–H87 and N138–D141 contribute to the GTP site. The tract at residues N138–D141 is G4. Residues S175 to L177 are G5.

The protein belongs to the TRAFAC class translation factor GTPase superfamily. Classic translation factor GTPase family. EF-Tu/EF-1A subfamily. As to quaternary structure, monomer.

It is found in the cytoplasm. The catalysed reaction is GTP + H2O = GDP + phosphate + H(+). GTP hydrolase that promotes the GTP-dependent binding of aminoacyl-tRNA to the A-site of ribosomes during protein biosynthesis. The polypeptide is Elongation factor Tu (Mycobacterium marinum (strain ATCC BAA-535 / M)).